We begin with the raw amino-acid sequence, 240 residues long: Orotidine 5'-phosphate decarboxylase (240 aa).

Substrate is bound by residues Asp10, Lys32, Asp59–Thr68, Thr122, Arg183, Gln192, Gly212, and Arg213. Lys61 (proton donor) is an active-site residue.

This sequence belongs to the OMP decarboxylase family. Type 1 subfamily. As to quaternary structure, homodimer.

The catalysed reaction is orotidine 5'-phosphate + H(+) = UMP + CO2. It functions in the pathway pyrimidine metabolism; UMP biosynthesis via de novo pathway; UMP from orotate: step 2/2. Its function is as follows. Catalyzes the decarboxylation of orotidine 5'-monophosphate (OMP) to uridine 5'-monophosphate (UMP). The sequence is that of Orotidine 5'-phosphate decarboxylase from Carboxydothermus hydrogenoformans (strain ATCC BAA-161 / DSM 6008 / Z-2901).